Here is a 217-residue protein sequence, read N- to C-terminus: Octanoyltransferase (217 aa).

Residues 35 to 214 (DEAGERIWLL…TLPAFLDKLR (180 aa)) enclose the BPL/LPL catalytic domain. Substrate-binding positions include 73 to 80 (RGGRYTYH), 145 to 147 (AIG), and 158 to 160 (GFS). Residue Cys176 is the Acyl-thioester intermediate of the active site.

The protein belongs to the LipB family.

It is found in the cytoplasm. The catalysed reaction is octanoyl-[ACP] + L-lysyl-[protein] = N(6)-octanoyl-L-lysyl-[protein] + holo-[ACP] + H(+). Its pathway is protein modification; protein lipoylation via endogenous pathway; protein N(6)-(lipoyl)lysine from octanoyl-[acyl-carrier-protein]: step 1/2. Functionally, catalyzes the transfer of endogenously produced octanoic acid from octanoyl-acyl-carrier-protein onto the lipoyl domains of lipoate-dependent enzymes. Lipoyl-ACP can also act as a substrate although octanoyl-ACP is likely to be the physiological substrate. In Sphingopyxis alaskensis (strain DSM 13593 / LMG 18877 / RB2256) (Sphingomonas alaskensis), this protein is Octanoyltransferase.